The following is a 201-amino-acid chain: Large ribosomal subunit protein eL15B (201 aa).

The interval 161–182 (SRGLTSIGKKSRGIGKGHRYNN) is disordered. Residues 169 to 179 (KKSRGIGKGHR) are compositionally biased toward basic residues. Position 183 is a phosphoserine (Ser-183).

It belongs to the eukaryotic ribosomal protein eL15 family. In terms of assembly, component of the large ribosomal subunit (LSU). Mature yeast ribosomes consist of a small (40S) and a large (60S) subunit. The 40S small subunit contains 1 molecule of ribosomal RNA (18S rRNA) and at least 33 different proteins. The large 60S subunit contains 3 rRNA molecules (25S, 5.8S and 5S rRNA) and at least 46 different proteins.

It is found in the cytoplasm. Its subcellular location is the nucleus. The protein resides in the nucleolus. Component of the ribosome, a large ribonucleoprotein complex responsible for the synthesis of proteins in the cell. The small ribosomal subunit (SSU) binds messenger RNAs (mRNAs) and translates the encoded message by selecting cognate aminoacyl-transfer RNA (tRNA) molecules. The large subunit (LSU) contains the ribosomal catalytic site termed the peptidyl transferase center (PTC), which catalyzes the formation of peptide bonds, thereby polymerizing the amino acids delivered by tRNAs into a polypeptide chain. The nascent polypeptides leave the ribosome through a tunnel in the LSU and interact with protein factors that function in enzymatic processing, targeting, and the membrane insertion of nascent chains at the exit of the ribosomal tunnel. The polypeptide is Large ribosomal subunit protein eL15B (rpl1502) (Schizosaccharomyces pombe (strain 972 / ATCC 24843) (Fission yeast)).